A 187-amino-acid chain; its full sequence is Transcriptional repressor NrdR (187 aa).

A zinc finger lies at 3–34; that stretch reads CPFCRHPDSRVVDSRTTDDGTSIRRRRQCPDC. Residues 46–136 form the ATP-cone domain; the sequence is LMVVKRSGVT…VYRAFDSLED (91 aa). Positions 146 to 187 are disordered; the sequence is EEQRERPAVDDEDHEDAGAERQGTDRGSGGTVEVPVPATVAD.

It belongs to the NrdR family. It depends on Zn(2+) as a cofactor.

Functionally, negatively regulates transcription of bacterial ribonucleotide reductase nrd genes and operons by binding to NrdR-boxes. The chain is Transcriptional repressor NrdR from Streptomyces avermitilis (strain ATCC 31267 / DSM 46492 / JCM 5070 / NBRC 14893 / NCIMB 12804 / NRRL 8165 / MA-4680).